Here is a 415-residue protein sequence, read N- to C-terminus: MVQRWLYSTNAKDIAVLYFMLAIFSGMAGTAMSLIIRLELAAPGSQYLHGNSQLFNVLVVGHAVLMIFFLVMPALIGGFGNQKRYESNNNNNQVMENKEYNLKLNYDKLGPYLAGLIEGDGTITVQNSSSMKKSKYRPLIVVVFKLEDLELANYLCNLTKCGKVYKKINRNYVLWTIHDLKGVYTLLNIINGYMRTPKYEAFVRGAEFMNNYINSTTITHNKLKNMDNIKIKPLDTSDIGSNAWLAGMTDADGNFSINLMNGKNRSSRAMPYYCLELRQNYQKNSNNNNINFSYFYIMSAIATYFNVNLYSRERNLNLLVSTNNTYKTYYSYKVMVANTYKNIKVMEYFNKYSLLSSKHLDFLDWSKLVILINNEGQSMKTNGSWELGMNLRKDYNKTRTTFTWSHLKNTYLENK.

The tract at residues Met-1 to Asn-81 is COX1 exons 1 to 3 encoded. Helical transmembrane passes span Val-16 to Ile-36 and Val-57 to Gly-77. Positions Gln-82 to Lys-415 are COX1 intron 3 encoded.

This sequence in the C-terminal section; belongs to the LAGLIDADG endonuclease family. Requires Mg(2+) as cofactor. The mature protein may arise from proteolytic cleavage of an in-frame translation of some COX1 exons plus the intron containing the aI3 open reading frame.

Its subcellular location is the mitochondrion. The protein localises to the membrane. Functionally, mitochondrial DNA endonuclease involved in intron homing. It introduces a specific double-strand break in the DNA of the COX1 gene and thus mediates the insertion of an intron, containing its own coding sequence (group I intron), into an intronless gene. Recognizes with high specificity and cleaves the sequence 5'-GGTTTTGGTAACTATTTATTAC-3'. This chain is Intron-encoded DNA endonuclease aI3 (AI3), found in Saccharomyces cerevisiae (strain ATCC 204508 / S288c) (Baker's yeast).